The sequence spans 364 residues: Peptide chain release factor 2 (364 aa).

N5-methylglutamine is present on Gln252.

Belongs to the prokaryotic/mitochondrial release factor family. Methylated by PrmC. Methylation increases the termination efficiency of RF2.

It is found in the cytoplasm. In terms of biological role, peptide chain release factor 2 directs the termination of translation in response to the peptide chain termination codons UGA and UAA. This Clostridium perfringens (strain SM101 / Type A) protein is Peptide chain release factor 2.